We begin with the raw amino-acid sequence, 417 residues long: Serine hydroxymethyltransferase (417 aa).

(6S)-5,6,7,8-tetrahydrofolate is bound by residues Leu-122 and 126-128; that span reads GHL. The residue at position 231 (Lys-231) is an N6-(pyridoxal phosphate)lysine.

It belongs to the SHMT family. In terms of assembly, homodimer. Requires pyridoxal 5'-phosphate as cofactor.

It localises to the cytoplasm. The catalysed reaction is (6R)-5,10-methylene-5,6,7,8-tetrahydrofolate + glycine + H2O = (6S)-5,6,7,8-tetrahydrofolate + L-serine. The protein operates within one-carbon metabolism; tetrahydrofolate interconversion. Its pathway is amino-acid biosynthesis; glycine biosynthesis; glycine from L-serine: step 1/1. Catalyzes the reversible interconversion of serine and glycine with tetrahydrofolate (THF) serving as the one-carbon carrier. This reaction serves as the major source of one-carbon groups required for the biosynthesis of purines, thymidylate, methionine, and other important biomolecules. Also exhibits THF-independent aldolase activity toward beta-hydroxyamino acids, producing glycine and aldehydes, via a retro-aldol mechanism. This chain is Serine hydroxymethyltransferase, found in Caldicellulosiruptor saccharolyticus (strain ATCC 43494 / DSM 8903 / Tp8T 6331).